The primary structure comprises 131 residues: Neo-calmodulin (131 aa).

4 EF-hand domains span residues 1-32, 33-68, 70-105, and 106-131; these read EFKEAFSLFDKDGDGTITTKELGTVMRSLGQN, PTEAELQDMINEVDADGNGTIDFPEFLTMMARKMKD, DSEEEIREAFRVFDKDSNGYISAAELRHVMTNLGEK, and LTDEEVDEMIREADIDGDGQVNYEEF. Residues Asp10, Asp12, Asp14, Thr16, Glu21, Asp46, Asp48, Asn50, Thr52, Glu57, Asp83, Asp85, Asn87, Tyr89, Glu94, Asp119, Asp121, Asp123, Gln125, and Glu130 each coordinate Ca(2+).

The protein belongs to the calmodulin family.

The chain is Neo-calmodulin from Gallus gallus (Chicken).